The primary structure comprises 199 residues: Elongation factor Ts (199 aa).

An involved in Mg(2+) ion dislocation from EF-Tu region spans residues Thr81–Val84.

This sequence belongs to the EF-Ts family.

The protein resides in the cytoplasm. In terms of biological role, associates with the EF-Tu.GDP complex and induces the exchange of GDP to GTP. It remains bound to the aminoacyl-tRNA.EF-Tu.GTP complex up to the GTP hydrolysis stage on the ribosome. In Thermotoga sp. (strain RQ2), this protein is Elongation factor Ts.